Reading from the N-terminus, the 435-residue chain is GTPase Der (435 aa).

2 consecutive EngA-type G domains span residues 3-168 and 176-351; these read PTVA…PEDD and VKLT…QNRR. GTP is bound by residues 9-16, 56-60, 120-123, 182-189, 229-233, and 294-297; these read GRPNVGKS, DTGGY, NKVD, DTAGL, and NKWD. The KH-like domain occupies 352-435; it reads MKIDTSRLNN…TPIELKFRRK (84 aa).

The protein belongs to the TRAFAC class TrmE-Era-EngA-EngB-Septin-like GTPase superfamily. EngA (Der) GTPase family. As to quaternary structure, associates with the 50S ribosomal subunit.

In terms of biological role, GTPase that plays an essential role in the late steps of ribosome biogenesis. This Chloroherpeton thalassium (strain ATCC 35110 / GB-78) protein is GTPase Der.